The primary structure comprises 400 residues: Phosphoglycerate kinase (400 aa).

Residues 22–24 (DLN), Arg37, 60–63 (HLGR), Arg119, and Arg159 each bind substrate. ATP contacts are provided by residues Lys209, Gly297, Glu328, and 354–357 (GGDS).

It belongs to the phosphoglycerate kinase family. As to quaternary structure, monomer.

The protein localises to the cytoplasm. It catalyses the reaction (2R)-3-phosphoglycerate + ATP = (2R)-3-phospho-glyceroyl phosphate + ADP. It participates in carbohydrate degradation; glycolysis; pyruvate from D-glyceraldehyde 3-phosphate: step 2/5. In Saccharopolyspora erythraea (strain ATCC 11635 / DSM 40517 / JCM 4748 / NBRC 13426 / NCIMB 8594 / NRRL 2338), this protein is Phosphoglycerate kinase.